The sequence spans 173 residues: Translation initiation factor IF-3 (173 aa).

It belongs to the IF-3 family. Monomer.

Its subcellular location is the cytoplasm. Functionally, IF-3 binds to the 30S ribosomal subunit and shifts the equilibrium between 70S ribosomes and their 50S and 30S subunits in favor of the free subunits, thus enhancing the availability of 30S subunits on which protein synthesis initiation begins. This is Translation initiation factor IF-3 from Caulobacter vibrioides (strain ATCC 19089 / CIP 103742 / CB 15) (Caulobacter crescentus).